A 132-amino-acid polypeptide reads, in one-letter code: Interleukin-13 (132 aa).

The N-terminal stretch at 1 to 18 (MALLLTTVIALTCLGGFA) is a signal peptide. Asn38, Asn49, Asn57, and Asn72 each carry an N-linked (GlcNAc...) asparagine glycan. 2 disulfide bridges follow: Cys48–Cys76 and Cys64–Cys90.

This sequence belongs to the IL-4/IL-13 family. Interacts with IL13RA2.

Its subcellular location is the secreted. Cytokine that plays important roles in allergic inflammation and immune response to parasite infection. Synergizes with IL2 in regulating interferon-gamma synthesis. Stimulates B-cell proliferation, and activation of eosinophils, basophils, and mast cells. Plays an important role in controlling IL33 activity by modulating the production of transmembrane and soluble forms of interleukin-1 receptor-like 1/IL1RL1. Displays the capacity to antagonize Th1-driven proinflammatory immune response and downregulates synthesis of many proinflammatory cytokines including IL1, IL6, IL10, IL12 and TNF-alpha through a mechanism that partially involves suppression of NF-kappa-B. Also functions on nonhematopoietic cells, including endothelial cells where it induces vascular cell adhesion protein 1/VCAM1, which is important in the recruitment of eosinophils. Exerts its biological effects through its receptors which comprises the IL4R chain and the IL13RA1 chain, to activate JAK1 and TYK2, leading to the activation of STAT6. Aside from IL13RA1, another receptor IL13RA2 acts as a high affinity decoy for IL13 and mediates internalization and depletion of extracellular IL13. The polypeptide is Interleukin-13 (IL13) (Pan troglodytes (Chimpanzee)).